A 623-amino-acid polypeptide reads, in one-letter code: V-type proton ATPase catalytic subunit A (623 aa).

252-259 (GAFGCGKT) serves as a coordination point for ATP.

The protein belongs to the ATPase alpha/beta chains family. As to quaternary structure, V-ATPase is a heteromultimeric enzyme composed of a peripheral catalytic V1 complex (main components: subunits A, B, C, D, E, and F) attached to an integral membrane V0 proton pore complex (main component: the proteolipid protein).

It carries out the reaction ATP + H2O + 4 H(+)(in) = ADP + phosphate + 5 H(+)(out). In terms of biological role, catalytic subunit of the peripheral V1 complex of vacuolar ATPase. V-ATPase vacuolar ATPase is responsible for acidifying a variety of intracellular compartments in eukaryotic cells. This Beta vulgaris (Sugar beet) protein is V-type proton ATPase catalytic subunit A.